A 166-amino-acid chain; its full sequence is NAD(P)H-quinone oxidoreductase subunit I, chloroplastic (166 aa).

2 consecutive 4Fe-4S ferredoxin-type domains span residues 55–84 (GRIH…VDWK) and 95–124 (LNYS…MTEE). [4Fe-4S] cluster-binding residues include C64, C67, C70, C74, C104, C107, C110, and C114.

Belongs to the complex I 23 kDa subunit family. In terms of assembly, NDH is composed of at least 16 different subunits, 5 of which are encoded in the nucleus. It depends on [4Fe-4S] cluster as a cofactor.

Its subcellular location is the plastid. The protein resides in the chloroplast thylakoid membrane. The catalysed reaction is a plastoquinone + NADH + (n+1) H(+)(in) = a plastoquinol + NAD(+) + n H(+)(out). It carries out the reaction a plastoquinone + NADPH + (n+1) H(+)(in) = a plastoquinol + NADP(+) + n H(+)(out). Its function is as follows. NDH shuttles electrons from NAD(P)H:plastoquinone, via FMN and iron-sulfur (Fe-S) centers, to quinones in the photosynthetic chain and possibly in a chloroplast respiratory chain. The immediate electron acceptor for the enzyme in this species is believed to be plastoquinone. Couples the redox reaction to proton translocation, and thus conserves the redox energy in a proton gradient. The protein is NAD(P)H-quinone oxidoreductase subunit I, chloroplastic of Silphium perfoliatum (Cup plant).